Reading from the N-terminus, the 510-residue chain is 2,3-bisphosphoglycerate-independent phosphoglycerate mutase (510 aa).

Residues Asp13 and Ser63 each coordinate Mn(2+). Catalysis depends on Ser63, which acts as the Phosphoserine intermediate. Substrate-binding positions include His124, 154 to 155 (RD), Arg186, Arg192, 262 to 265 (RADR), and Lys334. Mn(2+) is bound by residues Asp401, His405, Asp442, His443, and His461.

This sequence belongs to the BPG-independent phosphoglycerate mutase family. Monomer. It depends on Mn(2+) as a cofactor.

It carries out the reaction (2R)-2-phosphoglycerate = (2R)-3-phosphoglycerate. The protein operates within carbohydrate degradation; glycolysis; pyruvate from D-glyceraldehyde 3-phosphate: step 3/5. Catalyzes the interconversion of 2-phosphoglycerate and 3-phosphoglycerate. In Aliivibrio fischeri (strain MJ11) (Vibrio fischeri), this protein is 2,3-bisphosphoglycerate-independent phosphoglycerate mutase.